A 173-amino-acid polypeptide reads, in one-letter code: MHQVVCATTNPAKIQAILQAFHEIFGEGSCHIASVAVESGVPEQPFGSEETRAGARNRVANARRLLPEADFWVAIEAGIDGDSTFSWVVIENASQRGEARSATLPLPAVILEKVREGEALGPVMSRYTGIDEIGRKEGAIGVFTAGKLTRASVYHQAVILALSPFHNAVYQAL.

Residue 8–13 (TTNPAK) participates in substrate binding. The Mg(2+) site is built by glutamate 38 and glutamate 68. A substrate-binding site is contributed by 68 to 69 (EA).

The protein belongs to the YjjX NTPase family. Homodimer. Mg(2+) serves as cofactor. The cofactor is Mn(2+).

The enzyme catalyses XTP + H2O = XDP + phosphate + H(+). It catalyses the reaction ITP + H2O = IDP + phosphate + H(+). Its function is as follows. Phosphatase that hydrolyzes non-canonical purine nucleotides such as XTP and ITP to their respective diphosphate derivatives. Probably excludes non-canonical purines from DNA/RNA precursor pool, thus preventing their incorporation into DNA/RNA and avoiding chromosomal lesions. The protein is Inosine/xanthosine triphosphatase (yjjX) of Escherichia coli (strain ATCC 8739 / DSM 1576 / NBRC 3972 / NCIMB 8545 / WDCM 00012 / Crooks).